The sequence spans 328 residues: 3-dehydroquinate synthase (328 aa).

This sequence belongs to the archaeal-type DHQ synthase family.

It catalyses the reaction 2-amino-2,3,7-trideoxy-D-lyxo-hept-6-ulosonate + NAD(+) + H2O = 3-dehydroquinate + NH4(+) + NADH + H(+). Functionally, catalyzes the oxidative deamination and cyclization of 2-amino-3,7-dideoxy-D-threo-hept-6-ulosonic acid (ADH) to yield 3-dehydroquinate (DHQ), which is fed into the canonical shikimic pathway of aromatic amino acid biosynthesis. This is 3-dehydroquinate synthase from Methanoculleus marisnigri (strain ATCC 35101 / DSM 1498 / JR1).